We begin with the raw amino-acid sequence, 273 residues long: Testis-specific serine/threonine-protein kinase 6 (273 aa).

Residues 12–267 (YKLGRTIGEG…AGQVARNCWL (256 aa)) enclose the Protein kinase domain. Residues 18 to 26 (IGEGSYSKV) and lysine 41 contribute to the ATP site. Aspartate 135 acts as the Proton acceptor in catalysis.

The protein belongs to the protein kinase superfamily. CAMK Ser/Thr protein kinase family. Microtubule inner protein component of sperm flagellar doublet microtubules. Interacts with HSP90; this interaction stabilizes and activates TSSK6. Interacts with the heat shock proteins HSPCB, HSPA8 and HSPA1A. These interactions appear to be required for TSSK6 kinase activity. Interacts with TSACC; this interaction is direct and recruits TSACC to HSP90, which is essential for kinase activity. Mg(2+) serves as cofactor. Autophosphorylated. Post-translationally, ubiquitinated; HSP90 activity negatively regulates ubiquitination and degradation. As to expression, highly expressed in testis. Expressed at lower levels in colon, small intestine, ovary, prostate, thymus, spleen and peripheral blood leukocytes.

The protein localises to the cytoplasm. The protein resides in the cytoskeleton. Its subcellular location is the flagellum axoneme. It localises to the nucleus. The enzyme catalyses L-seryl-[protein] + ATP = O-phospho-L-seryl-[protein] + ADP + H(+). It carries out the reaction L-threonyl-[protein] + ATP = O-phospho-L-threonyl-[protein] + ADP + H(+). In terms of biological role, serine/threonine-protein kinase component of the sperm flagellar doublet microtubules. May act as a regulator of sperm motility by mediating phosphorylation of sperm doublet microtubule proteins. Plays a role in DNA condensation during postmeiotic chromatin remodeling and histone-to-protamine transition during spermatogenesis. The sequence is that of Testis-specific serine/threonine-protein kinase 6 from Homo sapiens (Human).